The primary structure comprises 1755 residues: Transposon Ty1-GR2 Gag-Pol polyprotein (1755 aa).

A compositionally biased stretch (low complexity) spans 1–16 (MESQQLSQHSHISHGS). Disordered stretches follow at residues 1–93 (MESQ…MMTQ), 126–173 (PQSQ…RPPP), and 352–421 (GSRN…SKST). Composition is skewed to polar residues over residues 48–60 (TKAN…TPAS) and 127–152 (QSQF…GNTF). Residues 153–165 (TDSSSADSDMTST) are compositionally biased toward low complexity. Positions 299–401 (NNGIHINNKV…NSKSKTARAH (103 aa)) are RNA-binding. The segment covering 402-418 (NVSTSNNSPSTDNDSIS) has biased composition (low complexity). Residue S416 is modified to Phosphoserine. D461 (for protease activity; shared with dimeric partner) is an active-site residue. The segment at 583–640 (NVHTSESTRKYPYPFIHRMLAHANAQTIRYSLKNNTITYFNESDVDWSSAIDYQCPDC) is integrase-type zinc finger-like. Residues 660–835 (NSYEPFQYLH…AGLDISTLLP (176 aa)) form the Integrase catalytic domain. Residues D671 and D736 each coordinate Mg(2+). Disordered stretches follow at residues 956–1087 (SKAV…ETEK), 1092–1111 (RSPS…NIVP), and 1130–1187 (DLPL…DNET). Low complexity predominate over residues 960–969 (SPTDSTPPST). A compositionally biased stretch (polar residues) spans 1005–1015 (STPQISNIEST). The span at 1038–1053 (ESSHASKSKDFRHSDS) shows a compositional bias: basic and acidic residues. Composition is skewed to polar residues over residues 1054 to 1082 (YSEN…QISD) and 1101 to 1111 (PENNSSHNIVP). Residues 1178–1212 (KKRSLEDNETEIKVSRDTWNTKNMRSLEPPRSKKR) carry the Bipartite nuclear localization signal motif. The 139-residue stretch at 1338-1476 (NNYYITQLDI…DILGLEIKYQ (139 aa)) folds into the Reverse transcriptase Ty1/copia-type domain. 6 residues coordinate Mg(2+): D1346, D1427, D1428, D1610, E1652, and D1685. Residues 1610–1752 (DASYGNQPYY…IKTFKLLTNK (143 aa)) form the RNase H Ty1/copia-type domain.

In terms of assembly, the capsid protein forms a homotrimer, from which the VLPs are assembled. The protease is a homodimer, whose active site consists of two apposed aspartic acid residues. Post-translationally, initially, virus-like particles (VLPs) are composed of the structural unprocessed proteins Gag and Gag-Pol, and also contain the host initiator methionine tRNA (tRNA(i)-Met) which serves as a primer for minus-strand DNA synthesis, and a dimer of genomic Ty RNA. Processing of the polyproteins occurs within the particle and proceeds by an ordered pathway, called maturation. First, the protease (PR) is released by autocatalytic cleavage of the Gag-Pol polyprotein yielding capsid protein p45 and a Pol-p154 precursor protein. This cleavage is a prerequisite for subsequent processing of Pol-p154 at the remaining sites to release the mature structural and catalytic proteins. Maturation takes place prior to the RT reaction and is required to produce transposition-competent VLPs.

The protein localises to the cytoplasm. Its subcellular location is the nucleus. The catalysed reaction is DNA(n) + a 2'-deoxyribonucleoside 5'-triphosphate = DNA(n+1) + diphosphate. It carries out the reaction Endonucleolytic cleavage to 5'-phosphomonoester.. Its function is as follows. Capsid protein (CA) is the structural component of the virus-like particle (VLP), forming the shell that encapsulates the retrotransposons dimeric RNA genome. The particles are assembled from trimer-clustered units and there are holes in the capsid shells that allow for the diffusion of macromolecules. CA also has nucleocapsid-like chaperone activity, promoting primer tRNA(i)-Met annealing to the multipartite primer-binding site (PBS), dimerization of Ty1 RNA and initiation of reverse transcription. Functionally, the aspartyl protease (PR) mediates the proteolytic cleavages of the Gag and Gag-Pol polyproteins after assembly of the VLP. Reverse transcriptase/ribonuclease H (RT) is a multifunctional enzyme that catalyzes the conversion of the retro-elements RNA genome into dsDNA within the VLP. The enzyme displays a DNA polymerase activity that can copy either DNA or RNA templates, and a ribonuclease H (RNase H) activity that cleaves the RNA strand of RNA-DNA heteroduplexes during plus-strand synthesis and hydrolyzes RNA primers. The conversion leads to a linear dsDNA copy of the retrotransposon that includes long terminal repeats (LTRs) at both ends. In terms of biological role, integrase (IN) targets the VLP to the nucleus, where a subparticle preintegration complex (PIC) containing at least integrase and the newly synthesized dsDNA copy of the retrotransposon must transit the nuclear membrane. Once in the nucleus, integrase performs the integration of the dsDNA into the host genome. In Saccharomyces cerevisiae (strain ATCC 204508 / S288c) (Baker's yeast), this protein is Transposon Ty1-GR2 Gag-Pol polyprotein (TY1B-GR2).